Reading from the N-terminus, the 367-residue chain is Putative C-&gt;U-editing enzyme APOBEC-4 (367 aa).

Residues 61-177 (PQTKHLTFYE…AWNREALRSL (117 aa)) form the CMP/dCMP-type deaminase domain. His93 provides a ligand contact to Zn(2+). Catalysis depends on Glu95, which acts as the Proton donor. Residues Cys127 and Cys134 each coordinate Zn(2+).

Belongs to the cytidine and deoxycytidylate deaminase family. Zn(2+) is required as a cofactor. In terms of tissue distribution, predominantly expressed in testis.

Its function is as follows. Putative C to U editing enzyme whose physiological substrate is not yet known. In Homo sapiens (Human), this protein is Putative C-&gt;U-editing enzyme APOBEC-4 (APOBEC4).